We begin with the raw amino-acid sequence, 253 residues long: MPKLQLSELLSLNKVEQILRLAEINTELEQLTAQERVSWALDNLEGKPAVSSSFGIQAAVMLQLVTDVKSDTPVILTDTGYLFPETYQFIDTLTERLNLNLQVFTADETPMWQEARYGKLWEQGVDGLKHYNRLNKVQPMRRALDQLQVGVWFSGLRRDQSSSRSHLPILSIQNGVFKFLPVIDWSNQEVHYYLEEKGLPYHPLRDEGYLSVGDTHTTQKWEPGMKEEDTRFFGLKRECGLHEDDAEAEGSGI.

The active-site Nucleophile; cysteine thiosulfonate intermediate is Cys-239.

The protein belongs to the PAPS reductase family. CysH subfamily.

The protein resides in the cytoplasm. The catalysed reaction is [thioredoxin]-disulfide + sulfite + adenosine 3',5'-bisphosphate + 2 H(+) = [thioredoxin]-dithiol + 3'-phosphoadenylyl sulfate. Its pathway is sulfur metabolism; hydrogen sulfide biosynthesis; sulfite from sulfate: step 3/3. Catalyzes the formation of sulfite from phosphoadenosine 5'-phosphosulfate (PAPS) using thioredoxin as an electron donor. The sequence is that of Phosphoadenosine 5'-phosphosulfate reductase from Aliivibrio salmonicida (strain LFI1238) (Vibrio salmonicida (strain LFI1238)).